A 472-amino-acid polypeptide reads, in one-letter code: Hepatocyte nuclear factor 3-alpha (472 aa).

The fork-head DNA-binding region spans 169–260; that stretch reads AKPPYSYISL…GNMFENGCYL (92 aa). Residues 269-392 form a disordered region; the sequence is EKQPGAGGGG…ESQLHLKGDP (124 aa). The span at 273-289 shows a compositional bias: gly residues; that stretch reads GAGGGGGSGSGGSGAKG. Phosphoserine is present on residues Ser-307 and Ser-331. Composition is skewed to low complexity over residues 322-332 and 351-366; these read GAPAPGPAASP and TPAS…GPGA.

Binds DNA as a monomer. Interacts with FOXA2. Interacts with NKX2-1. Interacts with HDAC7. Interacts with the histone H3-H4 heterodimer. Associates with nucleosomes containing histone H2A. Interacts with AR. Interacts with NR0B2. As to expression, highly expressed in prostate and ESR1-positive breast tumors. Overexpressed in esophageal and lung adenocarcinomas.

The protein resides in the nucleus. Transcription factor that is involved in embryonic development, establishment of tissue-specific gene expression and regulation of gene expression in differentiated tissues. Is thought to act as a 'pioneer' factor opening the compacted chromatin for other proteins through interactions with nucleosomal core histones and thereby replacing linker histones at target enhancer and/or promoter sites. Binds DNA with the consensus sequence 5'-[AC]A[AT]T[AG]TT[GT][AG][CT]T[CT]-3'. Proposed to play a role in translating the epigenetic signatures into cell type-specific enhancer-driven transcriptional programs. Its differential recruitment to chromatin is dependent on distribution of histone H3 methylated at 'Lys-5' (H3K4me2) in estrogen-regulated genes. Involved in the development of multiple endoderm-derived organ systems such as liver, pancreas, lung and prostate; FOXA1 and FOXA2 seem to have at least in part redundant roles. Modulates the transcriptional activity of nuclear hormone receptors. Is involved in ESR1-mediated transcription; required for ESR1 binding to the NKX2-1 promoter in breast cancer cells; binds to the RPRM promoter and is required for the estrogen-induced repression of RPRM. Involved in regulation of apoptosis by inhibiting the expression of BCL2. Involved in cell cycle regulation by activating expression of CDKN1B, alone or in conjunction with BRCA1. Originally described as a transcription activator for a number of liver genes such as AFP, albumin, tyrosine aminotransferase, PEPCK, etc. Interacts with the cis-acting regulatory regions of these genes. Involved in glucose homeostasis. The polypeptide is Hepatocyte nuclear factor 3-alpha (FOXA1) (Homo sapiens (Human)).